A 215-amino-acid polypeptide reads, in one-letter code: MEGRIPLIGEEFPRVEVKTTHGKKVLPDDFRGKWFVLFSHPADFTPVCTTEFVAFQKRYDEFRKLNTELIGLSIDQVFSHIKWIEWIKEKLGVEIEFPVIADDLGEVSRRLGLIHPNKGTNTVRAVFIVDPNGIIRAIVYYPQEVGRNIDEILRAVKALQTSDEKGVAIPANWPSNELINDSVIVPPASSVEEARKRLESKDFECYDWWFCYKKV.

The 156-residue stretch at 6–161 folds into the Thioredoxin domain; sequence PLIGEEFPRV…ILRAVKALQT (156 aa). Cys-48 (cysteine sulfenic acid (-SOH) intermediate) is an active-site residue. Arg-124 serves as a coordination point for substrate. The cysteines at positions 205 and 211 are disulfide-linked.

This sequence belongs to the peroxiredoxin family. Prx6 subfamily. In terms of assembly, homodecamer. Pentamer of dimers that assemble into a ring structure.

The protein localises to the cytoplasm. It carries out the reaction a hydroperoxide + [thioredoxin]-dithiol = an alcohol + [thioredoxin]-disulfide + H2O. In terms of biological role, thiol-specific peroxidase that catalyzes the reduction of hydrogen peroxide and organic hydroperoxides to water and alcohols, respectively. Plays a role in cell protection against oxidative stress by detoxifying peroxides. In Thermotoga maritima (strain ATCC 43589 / DSM 3109 / JCM 10099 / NBRC 100826 / MSB8), this protein is Peroxiredoxin.